The primary structure comprises 61 residues: MAKKSMIAKCNRPAKFSSREYTRCARCGRPHSVYRKFHLCRICLRELAHKGQIPGLKKASW.

Residues C24, C27, C40, and C43 each contribute to the Zn(2+) site.

It belongs to the universal ribosomal protein uS14 family. Zinc-binding uS14 subfamily. Part of the 30S ribosomal subunit. Contacts proteins S3 and S10. Requires Zn(2+) as cofactor.

In terms of biological role, binds 16S rRNA, required for the assembly of 30S particles and may also be responsible for determining the conformation of the 16S rRNA at the A site. The chain is Small ribosomal subunit protein uS14B from Limosilactobacillus reuteri (strain DSM 20016) (Lactobacillus reuteri).